Here is a 119-residue protein sequence, read N- to C-terminus: MARVKFGKVTRRRRKKILKLAKGYWGAKSKLFRVANQAVMKSLMYAYIGRKLRKRDFRRLWITRINAAARAHGISYSRFINGLKKAGIEINRKMLSEMAIHDEKAFEELVNIAKQHLNA.

This sequence belongs to the bacterial ribosomal protein bL20 family.

Its function is as follows. Binds directly to 23S ribosomal RNA and is necessary for the in vitro assembly process of the 50S ribosomal subunit. It is not involved in the protein synthesizing functions of that subunit. This is Large ribosomal subunit protein bL20 from Thermoanaerobacter sp. (strain X514).